We begin with the raw amino-acid sequence, 303 residues long: Quinolinate synthase (303 aa).

Residues His25 and Ser42 each contribute to the iminosuccinate site. Cys87 contributes to the [4Fe-4S] cluster binding site. Iminosuccinate contacts are provided by residues 113 to 115 (YVN) and Ser130. Cys174 is a binding site for [4Fe-4S] cluster. Iminosuccinate is bound by residues 200–202 (HPE) and Thr217. Cys260 serves as a coordination point for [4Fe-4S] cluster.

This sequence belongs to the quinolinate synthase family. Type 2 subfamily. Homodimer. The cofactor is [4Fe-4S] cluster.

The protein localises to the cytoplasm. The catalysed reaction is iminosuccinate + dihydroxyacetone phosphate = quinolinate + phosphate + 2 H2O + H(+). Its pathway is cofactor biosynthesis; NAD(+) biosynthesis; quinolinate from iminoaspartate: step 1/1. Its function is as follows. Catalyzes the condensation of iminoaspartate with dihydroxyacetone phosphate to form quinolinate. This is Quinolinate synthase from Pyrococcus furiosus (strain ATCC 43587 / DSM 3638 / JCM 8422 / Vc1).